Here is a 473-residue protein sequence, read N- to C-terminus: Photosystem II CP43 reaction center protein (473 aa).

The propeptide occupies 1–14; that stretch reads MKTLYSLRRFYPVE. Position 15 is an N-acetylthreonine (threonine 15). Threonine 15 carries the phosphothreonine modification. 5 helical membrane passes run 69–93, 134–155, 178–200, 255–275, and 291–312; these read LFEV…PHLA, LLGP…KDRN, KALY…RRIT, KPFA…LSYS, and WFNN…ASQA. Residue glutamate 367 participates in [CaMn4O5] cluster binding. The helical transmembrane segment at 447–471 threads the bilayer; that stretch reads RARAAAAGFEKGIDRDFEPVLFMTP.

The protein belongs to the PsbB/PsbC family. PsbC subfamily. As to quaternary structure, PSII is composed of 1 copy each of membrane proteins PsbA, PsbB, PsbC, PsbD, PsbE, PsbF, PsbH, PsbI, PsbJ, PsbK, PsbL, PsbM, PsbT, PsbX, PsbY, PsbZ, Psb30/Ycf12, at least 3 peripheral proteins of the oxygen-evolving complex and a large number of cofactors. It forms dimeric complexes. Binds multiple chlorophylls and provides some of the ligands for the Ca-4Mn-5O cluster of the oxygen-evolving complex. It may also provide a ligand for a Cl- that is required for oxygen evolution. PSII binds additional chlorophylls, carotenoids and specific lipids. is required as a cofactor.

It localises to the plastid. Its subcellular location is the chloroplast thylakoid membrane. One of the components of the core complex of photosystem II (PSII). It binds chlorophyll and helps catalyze the primary light-induced photochemical processes of PSII. PSII is a light-driven water:plastoquinone oxidoreductase, using light energy to abstract electrons from H(2)O, generating O(2) and a proton gradient subsequently used for ATP formation. The polypeptide is Photosystem II CP43 reaction center protein (Nuphar advena (Common spatterdock)).